Consider the following 63-residue polypeptide: Large ribosomal subunit protein uL29 (63 aa).

It belongs to the universal ribosomal protein uL29 family.

The sequence is that of Large ribosomal subunit protein uL29 from Shewanella oneidensis (strain ATCC 700550 / JCM 31522 / CIP 106686 / LMG 19005 / NCIMB 14063 / MR-1).